The following is a 467-amino-acid chain: UDP-N-acetylmuramate--L-alanine ligase (467 aa).

114-120 (GTHGKTT) lines the ATP pocket.

This sequence belongs to the MurCDEF family.

The protein localises to the cytoplasm. The catalysed reaction is UDP-N-acetyl-alpha-D-muramate + L-alanine + ATP = UDP-N-acetyl-alpha-D-muramoyl-L-alanine + ADP + phosphate + H(+). The protein operates within cell wall biogenesis; peptidoglycan biosynthesis. Functionally, cell wall formation. The chain is UDP-N-acetylmuramate--L-alanine ligase from Rhodopseudomonas palustris (strain TIE-1).